The chain runs to 330 residues: Methionyl-tRNA formyltransferase (330 aa).

121 to 124 provides a ligand contact to (6S)-5,6,7,8-tetrahydrofolate; the sequence is SLLP.

This sequence belongs to the Fmt family.

The enzyme catalyses L-methionyl-tRNA(fMet) + (6R)-10-formyltetrahydrofolate = N-formyl-L-methionyl-tRNA(fMet) + (6S)-5,6,7,8-tetrahydrofolate + H(+). Functionally, attaches a formyl group to the free amino group of methionyl-tRNA(fMet). The formyl group appears to play a dual role in the initiator identity of N-formylmethionyl-tRNA by promoting its recognition by IF2 and preventing the misappropriation of this tRNA by the elongation apparatus. In Burkholderia cenocepacia (strain HI2424), this protein is Methionyl-tRNA formyltransferase.